A 185-amino-acid polypeptide reads, in one-letter code: MVDVGSLSKGMYIKYEGEIYRVIDVNKHFRARGSGLIRTKLKNMSTGLVREVNFNSGEKVEEAEITFRKASYIYNDGEKYYFMDNETFEQYGIPVSDIEEEKNYLVENTEVDLIMHDGKPIGIQLPTSVVLEVVETEPGFKGDTVSGGGKPAVLETGLKITVPFFVEKGQKVRVDTRTGEYIERA.

Belongs to the elongation factor P family.

The protein resides in the cytoplasm. Its pathway is protein biosynthesis; polypeptide chain elongation. In terms of biological role, involved in peptide bond synthesis. Stimulates efficient translation and peptide-bond synthesis on native or reconstituted 70S ribosomes in vitro. Probably functions indirectly by altering the affinity of the ribosome for aminoacyl-tRNA, thus increasing their reactivity as acceptors for peptidyl transferase. This chain is Elongation factor P, found in Thermosipho africanus (strain TCF52B).